The chain runs to 486 residues: Protein nucleotidyltransferase YdiU (486 aa).

Gly90, Gly92, Arg93, Lys113, Asp125, Gly126, Arg176, and Arg183 together coordinate ATP. Asp252 (proton acceptor) is an active-site residue. Positions 253 and 262 each coordinate Mg(2+). Asp262 serves as a coordination point for ATP.

It belongs to the SELO family. Mg(2+) is required as a cofactor. Requires Mn(2+) as cofactor.

It carries out the reaction L-seryl-[protein] + ATP = 3-O-(5'-adenylyl)-L-seryl-[protein] + diphosphate. It catalyses the reaction L-threonyl-[protein] + ATP = 3-O-(5'-adenylyl)-L-threonyl-[protein] + diphosphate. The enzyme catalyses L-tyrosyl-[protein] + ATP = O-(5'-adenylyl)-L-tyrosyl-[protein] + diphosphate. The catalysed reaction is L-histidyl-[protein] + UTP = N(tele)-(5'-uridylyl)-L-histidyl-[protein] + diphosphate. It carries out the reaction L-seryl-[protein] + UTP = O-(5'-uridylyl)-L-seryl-[protein] + diphosphate. It catalyses the reaction L-tyrosyl-[protein] + UTP = O-(5'-uridylyl)-L-tyrosyl-[protein] + diphosphate. Its function is as follows. Nucleotidyltransferase involved in the post-translational modification of proteins. It can catalyze the addition of adenosine monophosphate (AMP) or uridine monophosphate (UMP) to a protein, resulting in modifications known as AMPylation and UMPylation. The chain is Protein nucleotidyltransferase YdiU from Pseudomonas aeruginosa (strain ATCC 15692 / DSM 22644 / CIP 104116 / JCM 14847 / LMG 12228 / 1C / PRS 101 / PAO1).